We begin with the raw amino-acid sequence, 184 residues long: Acyl-homoserine-lactone synthase (184 aa).

Belongs to the autoinducer synthase family.

It catalyses the reaction a fatty acyl-[ACP] + S-adenosyl-L-methionine = an N-acyl-L-homoserine lactone + S-methyl-5'-thioadenosine + holo-[ACP] + H(+). Functionally, involved in the synthesis of the acyl-homoserine lactone (AHL) signal N-(3-hydroxydodecanoyl)-L-HSL (3-hydroxy-C(12)-HSL or OH-dDHL). Required for normal biofilm development. In Acinetobacter baumannii, this protein is Acyl-homoserine-lactone synthase.